Here is a 164-residue protein sequence, read N- to C-terminus: Dehydrin Rab16C (164 aa).

Residues 42–51 show a composition bias toward gly residues; sequence MGGHHAGAGG. Positions 42 to 164 are disordered; the sequence is MGGHHAGAGG…KIKEKLPGQH (123 aa). Positions 105–115 are enriched in low complexity; it reads GNNHQQQQMMG. Residues 128-138 are compositionally biased toward gly residues; sequence GMTGAGTGTGV. A compositionally biased stretch (basic and acidic residues) spans 147–164; it reads GEKKGFMDKIKEKLPGQH.

Belongs to the plant dehydrin family.

This is Dehydrin Rab16C (RAB16C) from Oryza sativa subsp. indica (Rice).